The primary structure comprises 501 residues: MFSNQYIQQRIHKANSLREEGKNPYKNGLKRSLTNAAFLEKYAYVKDLEEPKDKEKCESIVGRVKLLRLMGKACFIKIEDESAILQAYVSQNELNDEFKSLKKHLEVGDIVLVKGFPFATKTGELSVHALEFHILSKTIVPLPEKFHGLSDIELRYRQRYLDLIVNPGVKDVFKKRSLIVSSVRKFFEMEGFLEVETPMMHPIPGGANARPFITYHNALEVERYLRIAPELYLKRLIVGGFEAVFEINRNFRNEGMDHSHNPEFTMIEFYWAYHTYEDLIELSKRLFDYLLKTLNLDSKIIYNDMEVDFNQTSVISYLDALETIGGISRGILEKEDRLLAYLLEQGVKVEPNLTYGKLLAEAFDHFVEHKLINPTFVTQYPIEISPLARRNDSNPNIADRFELFIAGKEIANGFSELNDPLDQLERFKNQVAEKEKGDEEAQYMDEDYVWALAHGMPPTAGQGIGIDRLVMLLTGAKSIKDVILFPAMRPVKNDFNVESGE.

Mg(2+)-binding residues include Glu402 and Glu409.

This sequence belongs to the class-II aminoacyl-tRNA synthetase family. In terms of assembly, homodimer. The cofactor is Mg(2+).

Its subcellular location is the cytoplasm. It catalyses the reaction tRNA(Lys) + L-lysine + ATP = L-lysyl-tRNA(Lys) + AMP + diphosphate. The protein is Lysine--tRNA ligase of Helicobacter pylori (strain G27).